A 123-amino-acid polypeptide reads, in one-letter code: UPF0102 protein Pcar_2217 (123 aa).

Belongs to the UPF0102 family.

This Syntrophotalea carbinolica (strain DSM 2380 / NBRC 103641 / GraBd1) (Pelobacter carbinolicus) protein is UPF0102 protein Pcar_2217.